The sequence spans 296 residues: MMLPLQGAQMLQMLEKSLRKSLPASLKVYGTVFHINHGNPFNLKAVVDKWPDFNTVVVCPQEQDMTDDLDHYTNTYQIYSKDPQNCQEFLGSPELINWKQHLQIQSSQPSLNEAIQNLAAIKSFKVKQTQRILYMAAETAKELTPFLLKSKILSPNGGKPKAINQEMFKLSSMDVTHAHLVNKFWHFGGNERSQRFIERCIQTFPTCCLLGPEGTPVCWDLMDQTGEMRMAGTLPEYRLHGLVTYVIYSHAQKLGKLGFPVYSHVDYSNEAMQKMSYTLQHVPIPRSWNQWNCVPL.

An N6-acetyllysine; alternate mark is found at lysine 16, lysine 127, and lysine 141. N6-succinyllysine; alternate occurs at positions 16, 127, and 141. Lysine 159 bears the N6-acetyllysine mark. At lysine 169 the chain carries N6-succinyllysine. 2 positions are modified to N6-acetyllysine; alternate: lysine 183 and lysine 256. N6-succinyllysine; alternate is present on residues lysine 183 and lysine 256.

It belongs to the glycine N-acyltransferase family. Predominantly expressed in liver (at protein level) and kidney. Down-regulated in hepatocellular carcinoma and other liver cancers.

Its subcellular location is the mitochondrion. It carries out the reaction an acyl-CoA + glycine = an N-acylglycine + CoA + H(+). The catalysed reaction is benzoyl-CoA + glycine = N-benzoylglycine + CoA + H(+). Functionally, mitochondrial acyltransferase which transfers an acyl group to the N-terminus of glycine and glutamine, although much less efficiently. Can conjugate numerous substrates to form a variety of N-acylglycines, with a preference for benzoyl-CoA over phenylacetyl-CoA as acyl donors. Thereby detoxify xenobiotics, such as benzoic acid or salicylic acid, and endogenous organic acids, such as isovaleric acid. The polypeptide is Glycine N-acyltransferase (GLYAT) (Homo sapiens (Human)).